We begin with the raw amino-acid sequence, 43 residues long: Potassium channel toxin gamma-KTx 4.12 (43 aa).

4 disulfide bridges follow: Cys5–Cys23, Cys11–Cys34, Cys20–Cys39, and Cys24–Cys41.

In terms of tissue distribution, expressed by the venom gland.

It localises to the secreted. Reversibly blocks Kv11/ERG potassium channels. Is less toxic than ergtoxin (AC Q86QT3). The protein is Potassium channel toxin gamma-KTx 4.12 of Centruroides sculpturatus (Arizona bark scorpion).